The chain runs to 89 residues: Small ribosomal subunit protein uS15 (89 aa).

Over residues 1 to 18 (MSLDTAEKQKLIENHQVH) the composition is skewed to basic and acidic residues. A disordered region spans residues 1-23 (MSLDTAEKQKLIENHQVHPTDTG).

The protein belongs to the universal ribosomal protein uS15 family. In terms of assembly, part of the 30S ribosomal subunit. Forms a bridge to the 50S subunit in the 70S ribosome, contacting the 23S rRNA.

Its function is as follows. One of the primary rRNA binding proteins, it binds directly to 16S rRNA where it helps nucleate assembly of the platform of the 30S subunit by binding and bridging several RNA helices of the 16S rRNA. Forms an intersubunit bridge (bridge B4) with the 23S rRNA of the 50S subunit in the ribosome. The sequence is that of Small ribosomal subunit protein uS15 from Prochlorococcus marinus (strain AS9601).